The following is a 269-amino-acid chain: MPELPEVETSRRGIEPYLVGQTILYAVVRNARLRWPVSDEILTLSDQPVLSVQRRAKYLLLELPKGWIIIHLGMSGSLRVLSEETAAEKHDHVDLVVSNGKILRYTDPRRFGAWLWAKDLETSNVLAHLGPEPLSDEFTAQYLFDKSRNKRTLIKPWLMDNKVVVGVGNIYASESLFAAGILPDRAAGSLTDAESVLLVATIKAVLLHSIEQGGTTLRDFLQSDGKPGYFAQELQVYGRAGEPCRQCGHPIEIAKHGQRSTFFCRHCQH.

Pro-2 serves as the catalytic Schiff-base intermediate with DNA. The active-site Proton donor is Glu-3. The Proton donor; for beta-elimination activity role is filled by Lys-57. DNA-binding residues include His-90, Arg-109, and Lys-150. The FPG-type zinc-finger motif lies at 235–269 (QVYGRAGEPCRQCGHPIEIAKHGQRSTFFCRHCQH). The active-site Proton donor; for delta-elimination activity is Arg-259.

This sequence belongs to the FPG family. As to quaternary structure, monomer. Requires Zn(2+) as cofactor.

It catalyses the reaction Hydrolysis of DNA containing ring-opened 7-methylguanine residues, releasing 2,6-diamino-4-hydroxy-5-(N-methyl)formamidopyrimidine.. It carries out the reaction 2'-deoxyribonucleotide-(2'-deoxyribose 5'-phosphate)-2'-deoxyribonucleotide-DNA = a 3'-end 2'-deoxyribonucleotide-(2,3-dehydro-2,3-deoxyribose 5'-phosphate)-DNA + a 5'-end 5'-phospho-2'-deoxyribonucleoside-DNA + H(+). Its function is as follows. Involved in base excision repair of DNA damaged by oxidation or by mutagenic agents. Acts as a DNA glycosylase that recognizes and removes damaged bases. Has a preference for oxidized purines, such as 7,8-dihydro-8-oxoguanine (8-oxoG). Has AP (apurinic/apyrimidinic) lyase activity and introduces nicks in the DNA strand. Cleaves the DNA backbone by beta-delta elimination to generate a single-strand break at the site of the removed base with both 3'- and 5'-phosphates. This chain is Formamidopyrimidine-DNA glycosylase, found in Yersinia pseudotuberculosis serotype O:1b (strain IP 31758).